An 807-amino-acid chain; its full sequence is Ribosomal RNA large subunit methyltransferase K/L (807 aa).

In terms of domain architecture, THUMP spans 67–182; the sequence is QIYKICLWSR…EKQAEIFLDL (116 aa). Over residues 548–560 the composition is skewed to polar residues; that stretch reads NTQYGNPEASAQS. The tract at residues 548–602 is disordered; that stretch reads NTQYGNPEASAQSKESKNAPEPKKDNRNRYKGNKFQQAREEAKRQEAQRLAQKKR. 2 stretches are compositionally biased toward basic and acidic residues: residues 561 to 575 and 584 to 594; these read KESK…DNRN and QAREEAKRQEA.

It belongs to the methyltransferase superfamily. RlmKL family.

It localises to the cytoplasm. The enzyme catalyses guanosine(2445) in 23S rRNA + S-adenosyl-L-methionine = N(2)-methylguanosine(2445) in 23S rRNA + S-adenosyl-L-homocysteine + H(+). It catalyses the reaction guanosine(2069) in 23S rRNA + S-adenosyl-L-methionine = N(2)-methylguanosine(2069) in 23S rRNA + S-adenosyl-L-homocysteine + H(+). Functionally, specifically methylates the guanine in position 2445 (m2G2445) and the guanine in position 2069 (m7G2069) of 23S rRNA. The protein is Ribosomal RNA large subunit methyltransferase K/L of Psychrobacter sp. (strain PRwf-1).